We begin with the raw amino-acid sequence, 226 residues long: 8-oxoguanine DNA glycosylase/AP lyase (226 aa).

Active-site residues include Lys149 and Asp167.

This sequence belongs to the type-2 OGG1 family.

The enzyme catalyses 2'-deoxyribonucleotide-(2'-deoxyribose 5'-phosphate)-2'-deoxyribonucleotide-DNA = a 3'-end 2'-deoxyribonucleotide-(2,3-dehydro-2,3-deoxyribose 5'-phosphate)-DNA + a 5'-end 5'-phospho-2'-deoxyribonucleoside-DNA + H(+). Catalyzes the excision of an oxidatively damaged form of guanine (7,8-dihydro-8-oxoguanine = 8-oxoG) from DNA. Also cleaves the DNA backbone at apurinic/apyrimidinic sites (AP sites). This Aquifex aeolicus (strain VF5) protein is 8-oxoguanine DNA glycosylase/AP lyase.